A 405-amino-acid polypeptide reads, in one-letter code: Pyruvate decarboxylase 2 (405 aa).

A thiamine pyrophosphate binding region spans residues 232–314 (DSWFNCQKLK…FLINNGGYTI (83 aa)). Positions 282, 309, and 311 each coordinate Mg(2+). Glu315 contacts substrate.

This sequence belongs to the TPP enzyme family. As to quaternary structure, homotetramer. Requires a metal cation as cofactor. It depends on thiamine diphosphate as a cofactor.

It carries out the reaction a 2-oxocarboxylate + H(+) = an aldehyde + CO2. This is Pyruvate decarboxylase 2 (PDC2) from Pisum sativum (Garden pea).